A 319-amino-acid chain; its full sequence is Transcription factor bHLH111 (319 aa).

The interval 1 to 23 (MDHHHHIASRNSSTTSELPSFEP) is disordered. A compositionally biased stretch (polar residues) spans 9–18 (SRNSSTTSEL). The region spanning 195-244 (SEGSTLSPEKELPKAKLRDKITTLQQIVSPFGKTDTASVLQEAITYINFY) is the bHLH domain.

In terms of assembly, homodimer.

The protein resides in the nucleus. In Arabidopsis thaliana (Mouse-ear cress), this protein is Transcription factor bHLH111 (BHLH111).